The following is a 1331-amino-acid chain: Receptor-type adenylate cyclase B (1331 aa).

At 1-33 (MYADATHPRRACWCGAGGVSGCVRQRHAYRCSR) the chain is on the cytoplasmic side. The chain crosses the membrane as a helical span at residues 34-54 (LLAGVLLIVGALTLTLAVSTV). The Extracellular portion of the chain corresponds to 55–898 (PAAWAAGAVA…SHALTPAQRG (844 aa)). Residues N255, N429, N558, N574, and N657 are each glycosylated (N-linked (GlcNAc...) asparagine). Residues 899 to 919 (GAIAGIALLTVILLAVAGLAL) form a helical membrane-spanning segment. The Cytoplasmic segment spans residues 920–1331 (YCCMDNRNND…PTVCNVRGAH (412 aa)). One can recognise a Guanylate cyclase domain in the interval 940–1094 (TLLFTDIESS…DTSNMAARTE (155 aa)). Mg(2+)-binding residues include D945 and D988.

This sequence belongs to the adenylyl cyclase class-3 family. It depends on Mg(2+) as a cofactor.

Its subcellular location is the membrane. It carries out the reaction ATP = 3',5'-cyclic AMP + diphosphate. Its function is as follows. Could act as a receptor for an unknown ligand. The sequence is that of Receptor-type adenylate cyclase B (RAC-B) from Leishmania donovani.